Here is a 417-residue protein sequence, read N- to C-terminus: Serine hydroxymethyltransferase (417 aa).

Residues L121 and 125–127 each bind (6S)-5,6,7,8-tetrahydrofolate; that span reads GHL. K230 bears the N6-(pyridoxal phosphate)lysine mark. E245 serves as a coordination point for (6S)-5,6,7,8-tetrahydrofolate.

It belongs to the SHMT family. Homodimer. It depends on pyridoxal 5'-phosphate as a cofactor.

Its subcellular location is the cytoplasm. The enzyme catalyses (6R)-5,10-methylene-5,6,7,8-tetrahydrofolate + glycine + H2O = (6S)-5,6,7,8-tetrahydrofolate + L-serine. The protein operates within one-carbon metabolism; tetrahydrofolate interconversion. Its pathway is amino-acid biosynthesis; glycine biosynthesis; glycine from L-serine: step 1/1. Functionally, catalyzes the reversible interconversion of serine and glycine with tetrahydrofolate (THF) serving as the one-carbon carrier. This reaction serves as the major source of one-carbon groups required for the biosynthesis of purines, thymidylate, methionine, and other important biomolecules. Also exhibits THF-independent aldolase activity toward beta-hydroxyamino acids, producing glycine and aldehydes, via a retro-aldol mechanism. This is Serine hydroxymethyltransferase from Desulfitobacterium hafniense (strain DSM 10664 / DCB-2).